Reading from the N-terminus, the 74-residue chain is Small ribosomal subunit protein bS21 (74 aa).

Belongs to the bacterial ribosomal protein bS21 family.

This is Small ribosomal subunit protein bS21 from Coxiella burnetii (strain Dugway 5J108-111).